Reading from the N-terminus, the 68-residue chain is Copper transport protein ATOX1 (68 aa).

In terms of domain architecture, HMA spans 1 to 63 (MPKHEFSVDM…TLNKTGKAVS (63 aa)). Positions 12 and 15 each coordinate Cu cation. At S47 the chain carries Phosphoserine. An N6-acetyllysine modification is found at K60.

This sequence belongs to the ATX1 family. As to quaternary structure, homodimer. Interacts with ATP7B. Interacts with ATP7A. Interacts (via dimer form) with SLC31A1 (via C-terminal domain); this interaction improves ATOX1 stability and controls intracellular Cu(I) levels.

Functionally, binds and deliver cytosolic copper to the copper ATPase proteins. May be important in cellular antioxidant defense. The protein is Copper transport protein ATOX1 of Rattus norvegicus (Rat).